A 161-amino-acid polypeptide reads, in one-letter code: Cyclic pyranopterin monophosphate synthase (161 aa).

Substrate-binding positions include L75–H77 and M113–E114. D128 is an active-site residue.

It belongs to the MoaC family. As to quaternary structure, homohexamer; trimer of dimers.

The catalysed reaction is (8S)-3',8-cyclo-7,8-dihydroguanosine 5'-triphosphate = cyclic pyranopterin phosphate + diphosphate. The protein operates within cofactor biosynthesis; molybdopterin biosynthesis. Functionally, catalyzes the conversion of (8S)-3',8-cyclo-7,8-dihydroguanosine 5'-triphosphate to cyclic pyranopterin monophosphate (cPMP). This chain is Cyclic pyranopterin monophosphate synthase, found in Edwardsiella ictaluri (strain 93-146).